Consider the following 286-residue polypeptide: Cytosolic 5'-nucleotidase 3 (286 aa).

Residue Asp38 is the Nucleophile of the active site. Mg(2+) is bound by residues Asp38 and Asp40. The active-site Proton donor is the Asp40. Substrate contacts are provided by residues Glu85, Ser106, 153–154, and Lys202; that span reads SA. A Mg(2+)-binding site is contributed by Asp227.

It belongs to the pyrimidine 5'-nucleotidase family.

The protein localises to the cytoplasm. It catalyses the reaction a ribonucleoside 5'-phosphate + H2O = a ribonucleoside + phosphate. In terms of biological role, can act both as nucleotidase and as phosphotransferase. The chain is Cytosolic 5'-nucleotidase 3 (nt5c3) from Danio rerio (Zebrafish).